We begin with the raw amino-acid sequence, 466 residues long: Asparagine--tRNA ligase (466 aa).

It belongs to the class-II aminoacyl-tRNA synthetase family. Homodimer.

Its subcellular location is the cytoplasm. The enzyme catalyses tRNA(Asn) + L-asparagine + ATP = L-asparaginyl-tRNA(Asn) + AMP + diphosphate + H(+). This is Asparagine--tRNA ligase from Shewanella pealeana (strain ATCC 700345 / ANG-SQ1).